The sequence spans 584 residues: MTAVAPRVDGHVAPQRPEPTGHARKGSKAWLMMTTTDHKQLGIMYIIMSFSFFFLGGLMALLIRAELFTPGLQFLSNEQFNQLFTMHGTVMLLLYGTPIVWGFANYVLPLQIGAPDVAFPRLNAFGFWITTVGGVAMLTGFLTPGGAADFGWTMYSPLSDAIHSPGLGSDMWIVGVGATGIGSVASAINMLTTILCLRAPGMTMFRMPIFTWNIFVVSVLALLIFPLLLAAALGVLYDRKLGGHLYDPANGGSLLWQHLFWFFGHPEVYVLALPFFGIVSEIIPVFSRKPMFGYVGLIFATLSIGALSMAVWAHHMFVTGAVLLPFFSFMTFLISVPTGVKFFNWVGTMWKGHITWETPMIWSVGFMATFLFGGLTGIMLASPPLDFHLADSYFLIAHFHYTLFGTVVFASCAGVYFWFPKMTGRMMDERLGKIHFWLTFVGFHGTFLIQHWVGNMGMPRRYADYLDSDGFTIYNQISTVFSFLLGLSVIPFIWNVFKSWRYGELVTVDDPWGYGNSLEWATSCPPPRHNFASLPRIRSERPAFELHYPHMIERMRAEAHTGHHDDINAPELGTAPALASDSSR.

Residues 1 to 25 form a disordered region; it reads MTAVAPRVDGHVAPQRPEPTGHARK. The helical transmembrane segment at 43-63 threads the bilayer; the sequence is IMYIIMSFSFFFLGGLMALLI. His87 is a Fe(II)-heme a binding site. The next 6 helical transmembrane spans lie at 90–110, 122–142, 171–191, 214–234, 259–279, and 292–312; these read VMLL…VLPL, LNAF…TGFL, MWIV…INML, IFVV…AALG, LFWF…FGIV, and FGYV…MAVW. Cu cation-binding residues include His265 and Tyr269. Positions 265 to 269 form a cross-link, 1'-histidyl-3'-tyrosine (His-Tyr); that stretch reads HPEVY. Positions 314 and 315 each coordinate Cu cation. Transmembrane regions (helical) follow at residues 316 to 336 and 360 to 380; these read MFVT…LISV and MIWS…GIML. His398 serves as a coordination point for heme a3. Helical transmembrane passes span 399-419, 434-454, and 477-497; these read FHYT…YFWF, IHFW…HWVG, and ISTV…WNVF. A Fe(II)-heme a-binding site is contributed by His400. The segment at 564–584 is disordered; sequence HDDINAPELGTAPALASDSSR.

In terms of assembly, associates with subunits II, III and IV to form cytochrome c oxidase. The 4 subunit cytochrome c oxidase forms a supercomplex with the menaquinol-cytochrome c reductase complex (cytochrome bc1). It depends on Cu(2+) as a cofactor. The cofactor is heme.

It is found in the cell membrane. The enzyme catalyses 4 Fe(II)-[cytochrome c] + O2 + 8 H(+)(in) = 4 Fe(III)-[cytochrome c] + 2 H2O + 4 H(+)(out). The protein operates within energy metabolism; oxidative phosphorylation. Cytochrome c oxidase is the component of the respiratory chain that catalyzes the reduction of oxygen to water. Subunits 1-3 form the functional core of the enzyme complex. CO I is the catalytic subunit of the enzyme. Electrons originating in cytochrome c are transferred via the copper A center of subunit 2 and heme A of subunit 1 to the bimetallic center formed by heme A3 and copper B. This Corynebacterium glutamicum (strain ATCC 13032 / DSM 20300 / JCM 1318 / BCRC 11384 / CCUG 27702 / LMG 3730 / NBRC 12168 / NCIMB 10025 / NRRL B-2784 / 534) protein is Cytochrome c oxidase subunit 1 (ctaD).